Reading from the N-terminus, the 752-residue chain is Double zinc ribbon and ankyrin repeat-containing protein 1 (752 aa).

DZANK-type zinc fingers lie at residues 210–270 (CPKC…VVCE) and 338–386 (CSKC…GGCG). Over residues 448 to 469 (KKRSQQREAELSRQEQMRDRKP) the composition is skewed to basic and acidic residues. Disordered regions lie at residues 448–471 (KKRSQQREAELSRQEQMRDRKPLL) and 536–614 (PPEE…VGPE). Low complexity predominate over residues 536-554 (PPEESRSSSAGQRSRSVTS). The span at 555-580 (ESQNLSSVTEGRNSASPENNINTTGS) shows a compositional bias: polar residues. The span at 600-614 (PESKDSLLLKEVGPE) shows a compositional bias: basic and acidic residues. ANK repeat units follow at residues 638–667 (DGRPALVAAVLNGHHDVIPVLVQREADVNQ), 672–703 (LKNTALHEAAALGDEGLKSVEILLGCNASIRK), and 707–737 (RGQTPYDIAVAAGSSSVLSLMAAHLGQGLLL).

It localises to the cytoplasm. Its subcellular location is the cytoskeleton. The protein localises to the microtubule organizing center. The protein resides in the centrosome. It is found in the cilium basal body. Required for the intracellular transport of organelles and vesicles, and is essential for the photoreceptor's outer segments formation, maintenance and function. This Danio rerio (Zebrafish) protein is Double zinc ribbon and ankyrin repeat-containing protein 1 (dzank1).